A 653-amino-acid chain; its full sequence is 4-hydroxy-2,2'-bipyrrole-5-methanol synthase PigH (653 aa).

The region spanning 7-84 is the Carrier domain; the sequence is ETYETLKQSV…DALDGILQRE (78 aa). Ser-45 is subject to O-(pantetheine 4'-phosphoryl)serine. 354-355 serves as a coordination point for pyridoxal 5'-phosphate; sequence GY. Residue His-379 participates in substrate binding. Pyridoxal 5'-phosphate is bound by residues Ser-426, His-454, and Thr-482. Lys-485 bears the N6-(pyridoxal phosphate)lysine mark. A helical membrane pass occupies residues 512–532; sequence VFAATIPAPVAAGVIASIDVM.

It depends on pyridoxal 5'-phosphate as a cofactor.

It localises to the membrane. It functions in the pathway antibiotic biosynthesis; prodigiosin biosynthesis. Involved in the biosynthesis of 4-methoxy-2,2'-bipyrrole-5-carbaldehyde (MBC), one of the terminal products involved in the biosynthesis of the red antibiotic prodigiosin (Pig). Carrier of the L-malonyl group (malonyl-S-PigH), which is decarboxylated by PigJ to yield a C2 carbanion acetyl-S-PigH. Then the pyrrolyl group of pyrrolyl-S-cysteinyl PigJ intermediate is captured by the C2 carbanion acetyl-S-PigH to yield the pyrrolyl-beta-ketoacyl-S-PigH. In the last step, PigH catalyzes the decarboxylative condensation between the pyrrolyl-beta-ketoacyl (pyrrolyl-beta-ketoacyl-S-PigH) and L-serine to yield 4-hydroxy-2,2'-bipyrrole-5-methanol (HBM). The polypeptide is 4-hydroxy-2,2'-bipyrrole-5-methanol synthase PigH (Serratia sp. (strain ATCC 39006) (Prodigiosinella confusarubida)).